The chain runs to 157 residues: MRIGMGYDVHKLCENRKLILGGIEIPYELGLLGHSDADVLIHAIMDSLLGAAALGDIGKHFPDTDNKYKGISSMLLLKEVGKLLNENSYEIINIDATIIAQKPKMAPYIKDMIKNIASALCINENQVNIKATTEEGLGFTGEGLGISSQSICLINEK.

Residues D8 and H10 each coordinate a divalent metal cation. 4-CDP-2-C-methyl-D-erythritol 2-phosphate is bound by residues 8-10 (DVH) and 34-35 (HS). H42 serves as a coordination point for a divalent metal cation. Residues 56–58 (DIG), 61–65 (FPDTD), 100–106 (AQKPKMA), 132–135 (TTEE), and F139 contribute to the 4-CDP-2-C-methyl-D-erythritol 2-phosphate site.

Belongs to the IspF family. Homotrimer. A divalent metal cation is required as a cofactor.

The enzyme catalyses 4-CDP-2-C-methyl-D-erythritol 2-phosphate = 2-C-methyl-D-erythritol 2,4-cyclic diphosphate + CMP. The protein operates within isoprenoid biosynthesis; isopentenyl diphosphate biosynthesis via DXP pathway; isopentenyl diphosphate from 1-deoxy-D-xylulose 5-phosphate: step 4/6. Involved in the biosynthesis of isopentenyl diphosphate (IPP) and dimethylallyl diphosphate (DMAPP), two major building blocks of isoprenoid compounds. Catalyzes the conversion of 4-diphosphocytidyl-2-C-methyl-D-erythritol 2-phosphate (CDP-ME2P) to 2-C-methyl-D-erythritol 2,4-cyclodiphosphate (ME-CPP) with a corresponding release of cytidine 5-monophosphate (CMP). This chain is 2-C-methyl-D-erythritol 2,4-cyclodiphosphate synthase, found in Clostridium novyi (strain NT).